The primary structure comprises 210 residues: Large ribosomal subunit protein uL3 (210 aa).

Belongs to the universal ribosomal protein uL3 family. As to quaternary structure, part of the 50S ribosomal subunit. Forms a cluster with proteins L14 and L19.

One of the primary rRNA binding proteins, it binds directly near the 3'-end of the 23S rRNA, where it nucleates assembly of the 50S subunit. In Lawsonia intracellularis (strain PHE/MN1-00), this protein is Large ribosomal subunit protein uL3.